We begin with the raw amino-acid sequence, 143 residues long: Large ribosomal subunit protein uL11 (143 aa).

It belongs to the universal ribosomal protein uL11 family. In terms of assembly, part of the ribosomal stalk of the 50S ribosomal subunit. Interacts with L10 and the large rRNA to form the base of the stalk. L10 forms an elongated spine to which L12 dimers bind in a sequential fashion forming a multimeric L10(L12)X complex. One or more lysine residues are methylated.

Its function is as follows. Forms part of the ribosomal stalk which helps the ribosome interact with GTP-bound translation factors. The chain is Large ribosomal subunit protein uL11 from Salinispora tropica (strain ATCC BAA-916 / DSM 44818 / JCM 13857 / NBRC 105044 / CNB-440).